We begin with the raw amino-acid sequence, 343 residues long: S-adenosylmethionine:tRNA ribosyltransferase-isomerase (343 aa).

It belongs to the QueA family. In terms of assembly, monomer.

The protein localises to the cytoplasm. It carries out the reaction 7-aminomethyl-7-carbaguanosine(34) in tRNA + S-adenosyl-L-methionine = epoxyqueuosine(34) in tRNA + adenine + L-methionine + 2 H(+). It functions in the pathway tRNA modification; tRNA-queuosine biosynthesis. In terms of biological role, transfers and isomerizes the ribose moiety from AdoMet to the 7-aminomethyl group of 7-deazaguanine (preQ1-tRNA) to give epoxyqueuosine (oQ-tRNA). The chain is S-adenosylmethionine:tRNA ribosyltransferase-isomerase from Coxiella burnetii (strain CbuG_Q212) (Coxiella burnetii (strain Q212)).